The chain runs to 87 residues: MPIIKSAKKRVRITEKRTAYNREWKEKIKQAIKEFEKVVEEGNVEEAEAKLREASKILDKSAGKGIIHKNKAARKKSQLTRQFNKIA.

It belongs to the bacterial ribosomal protein bS20 family.

In terms of biological role, binds directly to 16S ribosomal RNA. In Halothermothrix orenii (strain H 168 / OCM 544 / DSM 9562), this protein is Small ribosomal subunit protein bS20.